The chain runs to 471 residues: Uronate isomerase (471 aa).

This sequence belongs to the metallo-dependent hydrolases superfamily. Uronate isomerase family.

The enzyme catalyses D-glucuronate = D-fructuronate. It carries out the reaction aldehydo-D-galacturonate = keto-D-tagaturonate. It participates in carbohydrate metabolism; pentose and glucuronate interconversion. In Latilactobacillus sakei subsp. sakei (strain 23K) (Lactobacillus sakei subsp. sakei), this protein is Uronate isomerase.